Consider the following 1225-residue polypeptide: Structural maintenance of chromosomes protein 1 (1225 aa).

33-40 is an ATP binding site; that stretch reads GPNGSGKS. Residues 173–489 adopt a coiled-coil conformation; sequence SGSIQYKKEY…SANNQEYDLN (317 aa). The 115-residue stretch at 527-641 folds into the SMC hinge domain; that stretch reads PGVKGLVHDL…CNTLNIAKDL (115 aa). Residues 679 to 1063 adopt a coiled-coil conformation; it reads KEEYQSLMSL…LKIKKKRKEL (385 aa). The short motif at 1057 to 1061 is the Nuclear localization signal element; it reads KKKRK.

Belongs to the SMC family. SMC1 subfamily. Cohesin complexes are composed of the SMC1 and SMC3 heterodimer attached via their SMC hinge domain, MCD1/SCC1 which link them, and IRR1/SCC3, which interacts with MCD1. The cohesin complex also interacts with SCC2, which is required for its association with chromosomes.

The protein localises to the nucleus. It is found in the chromosome. Involved in chromosome cohesion during cell cycle and in DNA repair. Central component of cohesin complex. The cohesin complex is required for the cohesion of sister chromatids after DNA replication. The cohesin complex apparently forms a large proteinaceous ring within which sister chromatids can be trapped. At anaphase, the complex is cleaved and dissociates from chromatin, allowing sister chromatids to segregate. This chain is Structural maintenance of chromosomes protein 1 (SMC1), found in Saccharomyces cerevisiae (strain ATCC 204508 / S288c) (Baker's yeast).